A 310-amino-acid polypeptide reads, in one-letter code: ADP-L-glycero-D-manno-heptose-6-epimerase (310 aa).

Residues 10–11, 31–32, Lys-38, Lys-53, 75–79, and Asn-92 each bind NADP(+); these read FI, DN, and EGACS. Tyr-140 functions as the Proton acceptor in the catalytic mechanism. Lys-144 is an NADP(+) binding site. Asn-169 is a binding site for substrate. The NADP(+) site is built by Val-170 and Lys-178. Lys-178 serves as the catalytic Proton acceptor. Substrate is bound by residues Ser-180, His-187, 201-204, Arg-209, and Tyr-272; that span reads FEGS.

It belongs to the NAD(P)-dependent epimerase/dehydratase family. HldD subfamily. In terms of assembly, homopentamer. NADP(+) is required as a cofactor.

It catalyses the reaction ADP-D-glycero-beta-D-manno-heptose = ADP-L-glycero-beta-D-manno-heptose. It participates in nucleotide-sugar biosynthesis; ADP-L-glycero-beta-D-manno-heptose biosynthesis; ADP-L-glycero-beta-D-manno-heptose from D-glycero-beta-D-manno-heptose 7-phosphate: step 4/4. Functionally, catalyzes the interconversion between ADP-D-glycero-beta-D-manno-heptose and ADP-L-glycero-beta-D-manno-heptose via an epimerization at carbon 6 of the heptose. The polypeptide is ADP-L-glycero-D-manno-heptose-6-epimerase (Salmonella newport (strain SL254)).